The following is a 250-amino-acid chain: Small ribosomal subunit protein uS3 (250 aa).

Residues I39–K111 form the KH type-2 domain.

It belongs to the universal ribosomal protein uS3 family. In terms of assembly, part of the 30S ribosomal subunit. Forms a tight complex with proteins S10 and S14.

Its function is as follows. Binds the lower part of the 30S subunit head. Binds mRNA in the 70S ribosome, positioning it for translation. The polypeptide is Small ribosomal subunit protein uS3 (Rubus stunt phytoplasma).